The chain runs to 59 residues: Large ribosomal subunit protein uL30 (59 aa).

This sequence belongs to the universal ribosomal protein uL30 family. Part of the 50S ribosomal subunit.

This chain is Large ribosomal subunit protein uL30, found in Clostridium kluyveri (strain ATCC 8527 / DSM 555 / NBRC 12016 / NCIMB 10680 / K1).